The sequence spans 269 residues: MLYLGVIGYPIKHSVSPAMHNAALQHEGIEGIYLAFEVKPDRLRDAVFGAKALGFRGLNVTIPFKESVVEFVELEGEAAKIKTVNTIDLVEMVGYNTDVYGVKAALSGTELGGKTALVVGAGGAGKAAALALLDMGSTVIVANRTEEKGREAVEMLRRYGECIFWPLSRVEELKGKVDVVVNATPLGMRGFKAEIPVPPSMLDGVELVFDTVYNPMETPLIREAKKRGCKVVYGIEMLVHQGAKAFEIWTGIEPDVGVMREAALRALRF.

Shikimate is bound by residues 14-16 (SVS) and Thr61. Residue Lys65 is the Proton acceptor of the active site. 2 residues coordinate shikimate: Asn85 and Asp98. NADP(+) contacts are provided by residues 120-124 (GAGGA), 143-148 (NRTEEK), and Thr211. Tyr213 contacts shikimate. NADP(+) is bound at residue Gly234.

It belongs to the shikimate dehydrogenase family. In terms of assembly, homodimer.

It catalyses the reaction shikimate + NADP(+) = 3-dehydroshikimate + NADPH + H(+). It functions in the pathway metabolic intermediate biosynthesis; chorismate biosynthesis; chorismate from D-erythrose 4-phosphate and phosphoenolpyruvate: step 4/7. Involved in the biosynthesis of the chorismate, which leads to the biosynthesis of aromatic amino acids. Catalyzes the reversible NADPH linked reduction of 3-dehydroshikimate (DHSA) to yield shikimate (SA). The polypeptide is Shikimate dehydrogenase (NADP(+)) (Archaeoglobus fulgidus (strain ATCC 49558 / DSM 4304 / JCM 9628 / NBRC 100126 / VC-16)).